Here is a 351-residue protein sequence, read N- to C-terminus: Photosystem II D2 protein (351 aa).

The helical transmembrane segment at 39-59 (CSYLALGGWLTGTTFVTSWYT) threads the bilayer. His116 lines the chlorophyll a pocket. A helical transmembrane segment spans residues 123–139 (GFCLRQFEIARLVGIRP). The pheophytin a site is built by Gln128 and Asn141. The helical transmembrane segment at 151–164 (VFVSVFLMYPLGQA) threads the bilayer. Position 196 (His196) interacts with chlorophyll a. Residues 206–226 (GALLCAIHGATVQNTLFEDGD) form a helical membrane-spanning segment. A plastoquinone-binding residues include His213 and Phe260. A Fe cation-binding site is contributed by His213. His267 contributes to the Fe cation binding site. The chain crosses the membrane as a helical span at residues 277-293 (GLWTSAFGIVGLALNLR).

Belongs to the reaction center PufL/M/PsbA/D family. As to quaternary structure, PSII is composed of 1 copy each of membrane proteins PsbA, PsbB, PsbC, PsbD, PsbE, PsbF, PsbH, PsbI, PsbJ, PsbK, PsbL, PsbM, PsbT, PsbX, PsbY, PsbZ, Psb30/Ycf12, at least 3 peripheral proteins of the oxygen-evolving complex and a large number of cofactors. It forms dimeric complexes. The D1/D2 heterodimer binds P680, chlorophylls that are the primary electron donor of PSII, and subsequent electron acceptors. It shares a non-heme iron and each subunit binds pheophytin, quinone, additional chlorophylls, carotenoids and lipids. There is also a Cl(-1) ion associated with D1 and D2, which is required for oxygen evolution. The PSII complex binds additional chlorophylls, carotenoids and specific lipids. is required as a cofactor.

The protein localises to the plastid. Its subcellular location is the chloroplast thylakoid membrane. It carries out the reaction 2 a plastoquinone + 4 hnu + 2 H2O = 2 a plastoquinol + O2. In terms of biological role, photosystem II (PSII) is a light-driven water:plastoquinone oxidoreductase that uses light energy to abstract electrons from H(2)O, generating O(2) and a proton gradient subsequently used for ATP formation. It consists of a core antenna complex that captures photons, and an electron transfer chain that converts photonic excitation into a charge separation. The D1/D2 (PsbA/PsbD) reaction center heterodimer binds P680, the primary electron donor of PSII as well as several subsequent electron acceptors. D2 is needed for assembly of a stable PSII complex. In Gracilaria tenuistipitata var. liui (Red alga), this protein is Photosystem II D2 protein.